The sequence spans 230 residues: uncharacterized protein (230 aa).

An N-terminal signal peptide occupies residues 1–16; that stretch reads MTCVNVCFFLFPPCHR. The next 4 helical transmembrane spans lie at 27–47, 118–138, 150–170, and 172–191; these read VDLL…IPLI, LFFF…FLFF, FPIL…LSFL, and SLSH…LRVF.

It is found in the cytoplasm. The protein resides in the nucleus membrane. This is an uncharacterized protein from Schizosaccharomyces pombe (strain 972 / ATCC 24843) (Fission yeast).